Here is a 748-residue protein sequence, read N- to C-terminus: Proton-associated sugar transporter A (748 aa).

A run of 6 helical transmembrane segments spans residues Ile-93 to Leu-113, Ser-123 to Trp-143, Arg-155 to Gly-175, Trp-191 to Asp-211, Ile-233 to Trp-253, and Val-268 to Ile-288. The interval Arg-294 to Ser-339 is disordered. The segment covering Leu-308–Leu-317 has biased composition (pro residues). Phosphothreonine is present on Thr-497. Transmembrane regions (helical) follow at residues Gly-533–Phe-553, Val-573–Ile-593, Phe-600–Leu-620, Leu-627–Leu-647, Phe-685–Ala-705, and Val-708–Ile-728.

Belongs to the glycoside-pentoside-hexuronide (GPH) cation symporter transporter (TC 2.A.2) family. As to expression, expressed in adult heart, brain, muscle and kidney, with very strong expression in brain. Also expressed in fetal brain, kidney and lung.

The protein localises to the membrane. The enzyme catalyses D-galactose(in) + H(+)(in) = D-galactose(out) + H(+)(out). It catalyses the reaction D-glucose(out) + H(+)(out) = D-glucose(in) + H(+)(in). In terms of biological role, proton-associated glucose transporter in the brain. This Homo sapiens (Human) protein is Proton-associated sugar transporter A.